Consider the following 220-residue polypeptide: Uracil-DNA glycosylase (220 aa).

The active-site Proton acceptor is the D65.

This sequence belongs to the uracil-DNA glycosylase (UDG) superfamily. UNG family.

It is found in the cytoplasm. It catalyses the reaction Hydrolyzes single-stranded DNA or mismatched double-stranded DNA and polynucleotides, releasing free uracil.. Its function is as follows. Excises uracil residues from the DNA which can arise as a result of misincorporation of dUMP residues by DNA polymerase or due to deamination of cytosine. The chain is Uracil-DNA glycosylase from Azobacteroides pseudotrichonymphae genomovar. CFP2.